The following is a 416-amino-acid chain: Formyl-CoA:oxalate CoA-transferase (416 aa).

CoA contacts are provided by residues 17–18, R38, 72–75, 96–98, H104, and 137–140; these read QS, LNTK, NFH, and KAYE. The Nucleophile role is filled by D169. Residue 248–250 participates in substrate binding; it reads GGQ. Residue 273–275 participates in CoA binding; sequence QEQ.

This sequence belongs to the CoA-transferase III family. Frc subfamily. In terms of assembly, homodimer.

It carries out the reaction formyl-CoA + oxalate = oxalyl-CoA + formate. It functions in the pathway metabolic intermediate degradation; oxalate degradation; CO(2) and formate from oxalate: step 1/2. Involved in the catabolism of oxalate and in the adapatation to low pH via the induction of the oxalate-dependent acid tolerance response (ATR). Catalyzes the transfer of the CoA moiety from formyl-CoA to oxalate. The chain is Formyl-CoA:oxalate CoA-transferase from Escherichia coli O6:H1 (strain CFT073 / ATCC 700928 / UPEC).